We begin with the raw amino-acid sequence, 306 residues long: UDP-N-acetylenolpyruvoylglucosamine reductase (306 aa).

The 166-residue stretch at 28 to 193 (KVGGPADFLA…VSAKFSLKPG (166 aa)) folds into the FAD-binding PCMH-type domain. R172 is an active-site residue. S222 serves as the catalytic Proton donor. Residue E292 is part of the active site.

Belongs to the MurB family. It depends on FAD as a cofactor.

The protein localises to the cytoplasm. It carries out the reaction UDP-N-acetyl-alpha-D-muramate + NADP(+) = UDP-N-acetyl-3-O-(1-carboxyvinyl)-alpha-D-glucosamine + NADPH + H(+). The protein operates within cell wall biogenesis; peptidoglycan biosynthesis. Cell wall formation. This is UDP-N-acetylenolpyruvoylglucosamine reductase from Streptococcus mutans serotype c (strain ATCC 700610 / UA159).